The sequence spans 347 residues: N-acetyl-gamma-glutamyl-phosphate reductase (347 aa).

C151 is an active-site residue.

Belongs to the NAGSA dehydrogenase family. Type 1 subfamily.

Its subcellular location is the cytoplasm. It carries out the reaction N-acetyl-L-glutamate 5-semialdehyde + phosphate + NADP(+) = N-acetyl-L-glutamyl 5-phosphate + NADPH + H(+). The protein operates within amino-acid biosynthesis; L-arginine biosynthesis; N(2)-acetyl-L-ornithine from L-glutamate: step 3/4. Catalyzes the NADPH-dependent reduction of N-acetyl-5-glutamyl phosphate to yield N-acetyl-L-glutamate 5-semialdehyde. In Corynebacterium diphtheriae (strain ATCC 700971 / NCTC 13129 / Biotype gravis), this protein is N-acetyl-gamma-glutamyl-phosphate reductase.